The following is a 460-amino-acid chain: Chromosomal replication initiator protein DnaA (460 aa).

Residues 1-91 (MSLINPKVSA…LLWQNEDKSI (91 aa)) are domain I, interacts with DnaA modulators. Positions 91–122 (ICSIDIQVTEEKNSSSSIISKNKEESVNNLGS) are domain II. A domain III, AAA+ region region spans residues 123–342 (PLDPRFTFDN…GALNKVAHTS (220 aa)). Residues G169, G171, K172, and T173 each contribute to the ATP site. Residues 343-460 (LIGRSMTVES…EINQLRKMFK (118 aa)) are domain IV, binds dsDNA.

This sequence belongs to the DnaA family. In terms of assembly, oligomerizes as a right-handed, spiral filament on DNA at oriC.

The protein resides in the cytoplasm. In terms of biological role, plays an essential role in the initiation and regulation of chromosomal replication. ATP-DnaA binds to the origin of replication (oriC) to initiate formation of the DNA replication initiation complex once per cell cycle. Binds the DnaA box (a 9 base pair repeat at the origin) and separates the double-stranded (ds)DNA. Forms a right-handed helical filament on oriC DNA; dsDNA binds to the exterior of the filament while single-stranded (ss)DNA is stabiized in the filament's interior. The ATP-DnaA-oriC complex binds and stabilizes one strand of the AT-rich DNA unwinding element (DUE), permitting loading of DNA polymerase. After initiation quickly degrades to an ADP-DnaA complex that is not apt for DNA replication. Binds acidic phospholipids. In Wolbachia sp. subsp. Brugia malayi (strain TRS), this protein is Chromosomal replication initiator protein DnaA.